We begin with the raw amino-acid sequence, 114 residues long: UPF0342 protein NWMN_1737 (114 aa).

The protein belongs to the UPF0342 family.

This chain is UPF0342 protein NWMN_1737, found in Staphylococcus aureus (strain Newman).